Here is a 416-residue protein sequence, read N- to C-terminus: Putative pseudouridine transporter (416 aa).

Residues 1–2 (MD) are Periplasmic-facing. The helical transmembrane segment at 3–23 (IMRSVVGMVVLLAIAFLLSVN) threads the bilayer. Residues 24–31 (KKSISLRT) are Cytoplasmic-facing. Residues 32 to 52 (VGAALLLQIAIGGIMLYFPPG) traverse the membrane as a helical segment. The Periplasmic segment spans residues 53-104 (KWAVEQAALGVHKVMSYSDAGSAFIFGSLVGPKMDVLFDGAGFIFAFRVLPA). A helical transmembrane segment spans residues 105–125 (IIFVTALISLLYYIGVMGLLI). The Cytoplasmic segment spans residues 126 to 172 (RILGSIFQKALNISKIESFVAVTTIFLGQNEIPAIVKPFIDRMNRNE). Residues 173–193 (LFTAICSGMASIAGSMMIGYA) form a helical membrane-spanning segment. Over 194 to 196 (GMG) the chain is Periplasmic. The chain crosses the membrane as a helical span at residues 197 to 217 (VPIDYLLAASLMAIPGGILFA). Topologically, residues 218–268 (RILSPATEPSQVTFENLSFSETPPKSFIEAAASGAMTGLKIAAGVATVVMA) are cytoplasmic. Residues 269-289 (FVAIIALINGIIGGIGGWFGF) form a helical membrane-spanning segment. Topologically, residues 290-352 (ANASLESIFG…QTGGTLEVKT (63 aa)) are periplasmic. The chain crosses the membrane as a helical span at residues 353-373 (IAIISFALCGFANFGSIGVVV). Topologically, residues 374 to 394 (GAFSAISPKRAPEIAQLGLRA) are cytoplasmic. A helical transmembrane segment spans residues 395-415 (LAAATLSNLMSATIAGFFIGL). Ala416 is a topological domain (periplasmic).

This sequence belongs to the concentrative nucleoside transporter (CNT) (TC 2.A.41) family.

Its subcellular location is the cell inner membrane. Its function is as follows. Could be involved in pseudouridine transport. This Escherichia coli (strain K12) protein is Putative pseudouridine transporter (psuT).